Consider the following 425-residue polypeptide: bZIP transcription factor RISBZ2 (425 aa).

Disordered regions lie at residues 1-50 (MERV…GGGG) and 169-257 (NSIG…AAHL). Residues 30 to 50 (QGGGGVASGGGGGVAGGGGGG) are compositionally biased toward gly residues. Polar residues predominate over residues 171–182 (IGGNATPVQNML). A compositionally biased stretch (acidic residues) spans 213-222 (SDDDDMEGEA). Over residues 231-247 (ADQRLQRRKQSNRESAR) the composition is skewed to basic and acidic residues. One can recognise a bZIP domain in the interval 232 to 295 (DQRLQRRKQS…NDAAVDNRVL (64 aa)). The interval 234-253 (RLQRRKQSNRESARRSRSRK) is basic motif. The segment at 260–274 (LEAQVSQLRVENSSL) is leucine-zipper. A disordered region spans residues 334–354 (MPFNSSPSEATSDAAVPIQDD).

Heterodimer with RISBZ1/BZIP58.

It is found in the nucleus. Its function is as follows. Transcriptional activator that binds to the DNA specific sequence 5'-GCCACGT[AC]AG-3' found in the alpha-globulin gene promoter. Does not bind to promoters of other major storage genes such as glutelin, prolamin and albumin. Binds to the DNA specific sequence 5'-TGAGTCA-3' found in seed storage protein gene promoters. In Oryza sativa subsp. japonica (Rice), this protein is bZIP transcription factor RISBZ2.